We begin with the raw amino-acid sequence, 175 residues long: MGKITFYEDRAFQGRSYECTTDCPNLQPYFSRCNSIRVESGCWMIYERPNCQGHQYFLRRGEYPNYQQWMGLSDSIRSCHLIPPHSGTYRMKIYERDELRGQMSELTDDCLSVQDRFHLTEIHSLNVLEGSWILYEMPNYRGRQYLLRPGEYRRFLDWGAPNAKVGSLRRVMDLY.

Beta/gamma crystallin 'Greek key' domains follow at residues 2–40 (GKIT…RVES) and 41–83 (GCWM…HLIP). The connecting peptide stretch occupies residues 84-88 (PHSGT). Beta/gamma crystallin 'Greek key' domains follow at residues 89–129 (YRMK…NVLE) and 130–172 (GSWI…RRVM).

Belongs to the beta/gamma-crystallin family. Monomer.

Functionally, crystallins are the dominant structural components of the vertebrate eye lens. The sequence is that of Gamma-crystallin B (CRYGB) from Macaca mulatta (Rhesus macaque).